The sequence spans 458 residues: Cell division protein FtsZ (458 aa).

GTP is bound by residues G22–N26, G109–G111, E140, R144, and D188. A disordered region spans residues K319–D458. Positions N368–I379 are enriched in polar residues. Positions K401–K418 are enriched in basic and acidic residues. Residues S425–T439 show a composition bias toward low complexity.

Belongs to the FtsZ family. In terms of assembly, homodimer. Polymerizes to form a dynamic ring structure in a strictly GTP-dependent manner. Interacts directly with several other division proteins.

The protein resides in the cytoplasm. Essential cell division protein that forms a contractile ring structure (Z ring) at the future cell division site. The regulation of the ring assembly controls the timing and the location of cell division. One of the functions of the FtsZ ring is to recruit other cell division proteins to the septum to produce a new cell wall between the dividing cells. Binds GTP and shows GTPase activity. This Lactobacillus johnsonii (strain CNCM I-12250 / La1 / NCC 533) protein is Cell division protein FtsZ.